A 498-amino-acid polypeptide reads, in one-letter code: Hexokinase-1 (498 aa).

Residues 4–24 form a helical membrane-spanning segment; it reads AAVGAAVVCTAAVCAAAAVLV. The region spanning 35 to 487 is the Hexokinase domain; that stretch reads GRVMAILKEL…SGIGAALLAA (453 aa). A hexokinase small subdomain region spans residues 90 to 228; sequence TGDEHGLFYA…GVDMRVTALV (139 aa). Gly104, Thr105, and Asn106 together coordinate ADP. D-glucose contacts are provided by Thr194, Lys195, Asn229, and Asp230. Positions 229–476 are hexokinase large subdomain; it reads NDTVGTLAGG…ETIVIEHSND (248 aa). Thr253 contacts ADP. Asn256, Glu284, and Glu315 together coordinate D-glucose. Gly441 contacts ADP.

Belongs to the hexokinase family.

The protein resides in the plastid. It localises to the chloroplast outer membrane. The enzyme catalyses a D-hexose + ATP = a D-hexose 6-phosphate + ADP + H(+). It carries out the reaction D-fructose + ATP = D-fructose 6-phosphate + ADP + H(+). The catalysed reaction is D-glucose + ATP = D-glucose 6-phosphate + ADP + H(+). Its pathway is carbohydrate metabolism; hexose metabolism. It functions in the pathway carbohydrate degradation; glycolysis; D-glyceraldehyde 3-phosphate and glycerone phosphate from D-glucose: step 1/4. Functionally, fructose and glucose phosphorylating enzyme. The chain is Hexokinase-1 (HXK1) from Spinacia oleracea (Spinach).